The following is a 307-amino-acid chain: Lipoyl synthase (307 aa).

7 residues coordinate [4Fe-4S] cluster: cysteine 55, cysteine 60, cysteine 66, cysteine 81, cysteine 85, cysteine 88, and serine 292. The Radical SAM core domain occupies tryptophan 67–serine 281.

The protein belongs to the radical SAM superfamily. Lipoyl synthase family. The cofactor is [4Fe-4S] cluster.

It is found in the cytoplasm. The catalysed reaction is [[Fe-S] cluster scaffold protein carrying a second [4Fe-4S](2+) cluster] + N(6)-octanoyl-L-lysyl-[protein] + 2 oxidized [2Fe-2S]-[ferredoxin] + 2 S-adenosyl-L-methionine + 4 H(+) = [[Fe-S] cluster scaffold protein] + N(6)-[(R)-dihydrolipoyl]-L-lysyl-[protein] + 4 Fe(3+) + 2 hydrogen sulfide + 2 5'-deoxyadenosine + 2 L-methionine + 2 reduced [2Fe-2S]-[ferredoxin]. It participates in protein modification; protein lipoylation via endogenous pathway; protein N(6)-(lipoyl)lysine from octanoyl-[acyl-carrier-protein]: step 2/2. In terms of biological role, catalyzes the radical-mediated insertion of two sulfur atoms into the C-6 and C-8 positions of the octanoyl moiety bound to the lipoyl domains of lipoate-dependent enzymes, thereby converting the octanoylated domains into lipoylated derivatives. The sequence is that of Lipoyl synthase from Mycobacterium avium (strain 104).